The sequence spans 215 residues: MGGKWSKSSIVGWPAIRERMRRARPAADRVGTQPAADGVGAVSQDLARHGAVTSSNTSHNNPDCAWLEAQEEEEVGFPVRPQVPLRPMTYKAAFDLGFFLKEKGGLDGLIYSKKRQEILDLWVYHTQGFFPDWQNYTPGPGIRYPLTFGWCYKLVPVDPAEVEETTEGEDNCLLHPINQHGMEDEHREILMWKFDSSLARRHVARELHPDYYKDC.

Residue Gly2 is the site of N-myristoyl glycine; by host attachment. Ser6 carries the post-translational modification Phosphoserine; by host. The acidic; interacts with host PACS1 and PACS2; stabilizes the interaction of NEF/MHC-I with host AP1M1; necessary for MHC-I internalization stretch occupies residues 71–74; that stretch reads EEEE. The segment at 78 to 87 is SH3-binding; interaction with Src family tyrosine kinases; that stretch reads PVRPQVPLRP. A PxxP; stabilizes the interaction of NEF/MHC-I with host AP1M1; necessary for MHC-I internalization motif is present at residues 81-84; that stretch reads PQVP. Residues 117–133 form a mediates dimerization, Nef-PTE1 interaction region; that stretch reads EILDLWVYHTQGFFPDW. A binding to ATP6V1H region spans residues 157–189; the sequence is VDPAEVEETTEGEDNCLLHPINQHGMEDEHREI. The short motif at 173–174 is the Dileucine internalization motif; necessary for CD4 internalization element; that stretch reads LL. Residues 183–184 carry the Diacidic; necessary for CD4 internalization motif; the sequence is ED.

The protein belongs to the lentivirus primate group Nef protein family. As to quaternary structure, monomer; cytosolic form. Homodimer; membrane bound form. Interacts with Nef associated p21-activated kinase (PAK2); this interaction activates PAK2. Associates with the Nef-MHC-I-AP1 complex; this complex is required for MHC-I internalization. Interacts (via C-terminus) with host PI3-kinase. Interacts with host PACS1; this interaction seems to be weak. Interacts with host PACS2. Interacts with host LCK and MAPK3; these interactions inhibit the kinase activity of the latter. Interacts with host ATP6V1H; this interaction may play a role in CD4 endocytosis. Associates with the CD4-Nef-AP2 complex; this complex is required for CD4 internalization. Interacts with host AP2 subunit alpha and AP2 subunit sigma2. Interacts with TCR-zeta chain; this interaction up-regulates the Fas ligand (FasL) surface expression. Interacts with host HCK, LYN, and SRC; these interactions activate the Src family kinases. Interacts with MAP3K5; this interaction inhibits the Fas and TNFR-mediated death signals. Interacts with beta-COP and PTE1. Interacts with human RACK1; this increases Nef phosphorylation by PKC. Interacts with TP53; this interaction decreases the half-life of TP53, protecting the infected cell against p53-mediated apoptosis. In terms of processing, the virion-associated Nef proteins are cleaved by the viral protease to release the soluble C-terminal core protein. Nef is probably cleaved concomitantly with viral structural proteins on maturation of virus particles. Post-translationally, myristoylated. Phosphorylated on serine residues, probably by host PKCdelta and theta.

Its subcellular location is the host cell membrane. The protein resides in the virion. It localises to the secreted. It is found in the host Golgi apparatus membrane. In terms of biological role, factor of infectivity and pathogenicity, required for optimal virus replication. Alters numerous pathways of T-lymphocyte function and down-regulates immunity surface molecules in order to evade host defense and increase viral infectivity. Alters the functionality of other immunity cells, like dendritic cells, monocytes/macrophages and NK cells. Functionally, in infected CD4(+) T-lymphocytes, down-regulates the surface MHC-I, mature MHC-II, CD4, CD28, CCR5 and CXCR4 molecules. Mediates internalization and degradation of host CD4 through the interaction of with the cytoplasmic tail of CD4, the recruitment of AP-2 (clathrin adapter protein complex 2), internalization through clathrin coated pits, and subsequent transport to endosomes and lysosomes for degradation. Diverts host MHC-I molecules to the trans-Golgi network-associated endosomal compartments by an endocytic pathway to finally target them for degradation. MHC-I down-regulation may involve AP-1 (clathrin adapter protein complex 1) or possibly Src family kinase-ZAP70/Syk-PI3K cascade recruited by PACS2. In consequence infected cells are masked for immune recognition by cytotoxic T-lymphocytes. Decreasing the number of immune receptors also prevents reinfection by more HIV particles (superinfection). Down-regulates host SERINC3 and SERINC5 thereby excluding these proteins from the viral particles. Virion infectivity is drastically higher when SERINC3 or SERINC5 are excluded from the viral envelope, because these host antiviral proteins impair the membrane fusion event necessary for subsequent virion penetration. Its function is as follows. Bypasses host T-cell signaling by inducing a transcriptional program nearly identical to that of anti-CD3 cell activation. Interaction with TCR-zeta chain up-regulates the Fas ligand (FasL). Increasing surface FasL molecules and decreasing surface MHC-I molecules on infected CD4(+) cells send attacking cytotoxic CD8+ T-lymphocytes into apoptosis. Plays a role in optimizing the host cell environment for viral replication without causing cell death by apoptosis. Protects the infected cells from apoptosis in order to keep them alive until the next virus generation is ready to strike. Inhibits the Fas and TNFR-mediated death signals by blocking MAP3K5/ASK1. Decreases the half-life of TP53, protecting the infected cell against p53-mediated apoptosis. Inhibits the apoptotic signals regulated by the Bcl-2 family proteins through the formation of a Nef/PI3-kinase/PAK2 complex that leads to activation of PAK2 and induces phosphorylation of host BAD. In terms of biological role, extracellular Nef protein targets CD4(+) T-lymphocytes for apoptosis by interacting with CXCR4 surface receptors. This chain is Protein Nef, found in Human immunodeficiency virus type 1 group M subtype K (isolate 96CM-MP535) (HIV-1).